A 397-amino-acid chain; its full sequence is Elongation factor Tu (397 aa).

In terms of domain architecture, tr-type G spans 10-207 (KPHVNIGTIG…AVDESIPDPV (198 aa)). The tract at residues 19 to 26 (GHVDHGKT) is G1. GTP is bound at residue 19 to 26 (GHVDHGKT). T26 contributes to the Mg(2+) binding site. Residues 63–67 (GITIN) form a G2 region. The G3 stretch occupies residues 84-87 (DAPG). Residues 84–88 (DAPGH) and 139–142 (NKAD) each bind GTP. The tract at residues 139-142 (NKAD) is G4. Residues 177–179 (SGL) are G5.

This sequence belongs to the TRAFAC class translation factor GTPase superfamily. Classic translation factor GTPase family. EF-Tu/EF-1A subfamily. Monomer.

The protein localises to the cytoplasm. It catalyses the reaction GTP + H2O = GDP + phosphate + H(+). Functionally, GTP hydrolase that promotes the GTP-dependent binding of aminoacyl-tRNA to the A-site of ribosomes during protein biosynthesis. This Tropheryma whipplei (strain TW08/27) (Whipple's bacillus) protein is Elongation factor Tu.